The chain runs to 731 residues: Unconventional prefoldin RPB5 interactor-like protein (731 aa).

Coiled coils occupy residues 91–115 (RLKL…KLHT) and 143–176 (LAEH…LRKL). Over residues 205 to 217 (PLKSTNESSPKSL) the composition is skewed to polar residues. Disordered stretches follow at residues 205 to 224 (PLKS…EEDE), 259 to 302 (MSGE…EEEV), and 370 to 396 (ASEE…TVSE). A coiled-coil region spans residues 220–258 (EEEDELWKKLEAEEQNEADELSSEAEESLKTTDNLVRQL). A compositionally biased stretch (acidic residues) spans 285–300 (ISEDDGDDDDEGDQEE). 2 coiled-coil regions span residues 357–379 (DDLQ…EVVE) and 452–477 (SIKT…VKEN). 2 stretches are compositionally biased toward polar residues: residues 508–518 (GAIPSPSSDQS) and 575–599 (SQFS…TSND). Disordered stretches follow at residues 508 to 527 (GAIP…KPSD), 567 to 682 (GSAY…DLRD), and 694 to 731 (VEKE…LNKT). The segment covering 611–621 (FYEKYEKDRAK) has biased composition (basic and acidic residues). The span at 623–644 (SKSNSSEGDATDPESATKSILR) shows a compositional bias: polar residues. Residues 661–673 (KKGRKVRNQKKKE) are compositionally biased toward basic residues. Residues 721-731 (RFKEQRALNKT) show a composition bias toward basic and acidic residues.

Belongs to the RNA polymerase II subunit 5-mediating protein family. As to quaternary structure, interacts with serine/threonine-protein phosphatases flw/PP1beta9C and Pp1-87B with higher affinity for Pp1-87B.

It localises to the cytoplasm. It is found in the chromosome. The protein resides in the nucleus. Its function is as follows. Inhibits the activity of serine/threonine-protein phosphatases flw/PP1beta9C and Pp1-87B. Required for germ line cell viability and differentiation, normal transcriptional activity and maintenance of DNA integrity. The sequence is that of Unconventional prefoldin RPB5 interactor-like protein from Drosophila melanogaster (Fruit fly).